Here is a 741-residue protein sequence, read N- to C-terminus: Fibrinogen alpha chain (741 aa).

A signal peptide spans 1–18 (MIPVTILCVLLCLNLAWA). The residue at position 19 (Gln-19) is a Pyrrolidone carboxylic acid. Residues 67-506 (CCRMQGIIDD…STRRSYNGKD (440 aa)) are a coiled coil. A disordered region spans residues 270–307 (VAEARGDSSPSHTGKLITSSHRRESPSLVDKTSSASSV). The span at 277 to 288 (SSPSHTGKLITS) shows a compositional bias: polar residues. The cysteines at positions 310 and 341 are disulfide-linked. Low complexity-rich tracts occupy residues 381 to 398 (STSS…HVTG) and 435 to 449 (SASH…SSSS). The segment at 381-510 (STSSRHSIGS…SYNGKDCDDI (130 aa)) is disordered. The span at 450–459 (FNKGGSTFET) shows a compositional bias: polar residues. Positions 498–739 (TRRSYNGKDC…VVRMKIRPLE (242 aa)) constitute a Fibrinogen C-terminal domain. 4 residues coordinate Ca(2+): Asp-666, Asp-668, Trp-670, and Glu-672. Cys-674 and Cys-687 are joined by a disulfide.

As to quaternary structure, heterohexamer; disulfide linked. Contains 2 sets of 3 non-identical chains (alpha, beta and gamma). The 2 heterotrimers are in head to head conformation with the N-termini in a small central domain. In terms of processing, conversion of fibrinogen to fibrin is triggered by thrombin, which cleaves fibrinopeptides A and B from alpha and beta chains, and thus exposes the N-terminal polymerization sites responsible for the formation of the soft clot. The soft clot is converted into the hard clot by factor XIIIA which catalyzes the epsilon-(gamma-glutamyl)lysine cross-linking between gamma chains (stronger) and between alpha chains (weaker) of different monomers. Post-translationally, forms F13A-mediated cross-links between a glutamine and the epsilon-amino group of a lysine residue, forming fibronectin-fibrinogen heteropolymers.

Its subcellular location is the secreted. Its function is as follows. Cleaved by the protease thrombin to yield monomers which, together with fibrinogen beta (FGB) and fibrinogen gamma (FGG), polymerize to form an insoluble fibrin matrix. Fibrin has a major function in hemostasis as one of the primary components of blood clots. This chain is Fibrinogen alpha chain (FGA), found in Gallus gallus (Chicken).